A 508-amino-acid chain; its full sequence is UDP-N-acetylmuramoyl-L-alanyl-D-glutamate--2,6-diaminopimelate ligase (508 aa).

Position 43 (Ser-43) interacts with UDP-N-acetyl-alpha-D-muramoyl-L-alanyl-D-glutamate. Residue 124 to 130 (GTNGKTT) coordinates ATP. UDP-N-acetyl-alpha-D-muramoyl-L-alanyl-D-glutamate-binding positions include 166 to 167 (TT), Ser-193, and Arg-201. At Lys-233 the chain carries N6-carboxylysine. Meso-2,6-diaminopimelate is bound by residues Arg-404, 428 to 431 (DNPR), Gly-478, and Glu-482. A Meso-diaminopimelate recognition motif motif is present at residues 428 to 431 (DNPR).

It belongs to the MurCDEF family. MurE subfamily. Mg(2+) is required as a cofactor. Post-translationally, carboxylation is probably crucial for Mg(2+) binding and, consequently, for the gamma-phosphate positioning of ATP.

It localises to the cytoplasm. The enzyme catalyses UDP-N-acetyl-alpha-D-muramoyl-L-alanyl-D-glutamate + meso-2,6-diaminopimelate + ATP = UDP-N-acetyl-alpha-D-muramoyl-L-alanyl-gamma-D-glutamyl-meso-2,6-diaminopimelate + ADP + phosphate + H(+). It functions in the pathway cell wall biogenesis; peptidoglycan biosynthesis. Its function is as follows. Catalyzes the addition of meso-diaminopimelic acid to the nucleotide precursor UDP-N-acetylmuramoyl-L-alanyl-D-glutamate (UMAG) in the biosynthesis of bacterial cell-wall peptidoglycan. The protein is UDP-N-acetylmuramoyl-L-alanyl-D-glutamate--2,6-diaminopimelate ligase of Chlorobaculum tepidum (strain ATCC 49652 / DSM 12025 / NBRC 103806 / TLS) (Chlorobium tepidum).